A 65-amino-acid chain; its full sequence is Large ribosomal subunit protein bL35 (65 aa).

Positions 1 to 51 (MPKMKTNRAAAKRFKKTANGGLKSANAYTSHRFHGKTKKQRRQLRGTDMMD) are disordered. Basic residues predominate over residues 31–44 (HRFHGKTKKQRRQL).

This sequence belongs to the bacterial ribosomal protein bL35 family.

This chain is Large ribosomal subunit protein bL35, found in Pediococcus pentosaceus (strain ATCC 25745 / CCUG 21536 / LMG 10740 / 183-1w).